The sequence spans 590 residues: Probable metalloendopeptidase G1-type (590 aa).

Residue His-41 coordinates Zn(2+). Glu-44 is a catalytic residue. A Zn(2+)-binding site is contributed by His-45.

The protein belongs to the peptidase M44 family. It depends on Zn(2+) as a cofactor.

Its function is as follows. Seems to be involved in viral proteins maturation by cleavage at Ala-Gly-|-Xaa motifs. This Homo sapiens (Human) protein is Probable metalloendopeptidase G1-type.